A 232-amino-acid polypeptide reads, in one-letter code: DASH complex subunit DUO1 (232 aa).

2 disordered regions span residues 1 to 44 (MADE…GGMR) and 133 to 232 (ERRR…RGAK). The stretch at 128–171 (ELEAEERRRQEEVERRAAEAERRREEARRKAEEEERRRAAAAAA) forms a coiled coil. Residues 133 to 165 (ERRRQEEVERRAAEAERRREEARRKAEEEERRR) are compositionally biased toward basic and acidic residues. Composition is skewed to low complexity over residues 167–183 (AAAA…VGRG) and 191–213 (GSGL…TTSG).

Belongs to the DASH complex DUO1 family. As to quaternary structure, component of the DASH complex consisting of ASK1, DAD1, DAD2, DAD3, DAD4, DAM1, DUO1, HSK3, SPC19 and SPC34, with a stoichiometry of one copy of each subunit per complex. Multiple DASH complexes oligomerize to form a ring that encircles spindle microtubules and organizes the rod-like NDC80 complexes of the outer kinetochore. DASH complex oligomerization strengthens microtubule attachments. On cytoplasmic microtubules, DASH complexes appear to form patches instead of rings.

It localises to the nucleus. The protein resides in the cytoplasm. It is found in the cytoskeleton. Its subcellular location is the spindle pole. The protein localises to the chromosome. It localises to the centromere. The protein resides in the kinetochore. In terms of biological role, component of the DASH complex that connects microtubules with kinetochores and couples microtubule depolymerisation to chromosome movement; it is involved in retrieving kinetochores to the spindle poles before their re-orientation on the spindle in early mitosis and allows microtubule depolymerization to pull chromosomes apart and resist detachment during anaphase. Kinetochores, consisting of a centromere-associated inner segment and a microtubule-contacting outer segment, play a crucial role in chromosome segregation by mediating the physical connection between centromeric DNA and microtubules. Kinetochores also serve as an input point for the spindle assembly checkpoint, which delays anaphase until all chromosomes have bioriented on the mitotic spindle. This is DASH complex subunit DUO1 from Chaetomium thermophilum (strain DSM 1495 / CBS 144.50 / IMI 039719) (Thermochaetoides thermophila).